The chain runs to 284 residues: NADH-cytochrome b5 reductase 1 (284 aa).

The helical transmembrane segment at 8–28 (PLVIFSTLAAIILAAVAVYVV) threads the bilayer. The region spanning 41–144 (DVFQKFPLIE…RGPKGFFTYT (104 aa)) is the FAD-binding FR-type domain. Residues 124–139 (DSKSVGDHIEVRGPKG) and 150–182 (HLGMIAGGTGIAPMYQVLTAILTNPDDKTKISL) contribute to the FAD site.

This sequence belongs to the flavoprotein pyridine nucleotide cytochrome reductase family. In terms of assembly, monomer. Component of the 2-(3-amino-3-carboxypropyl)histidine synthase complex composed of DPH1, DPH2, DPH3 and a NADH-dependent reductase, predominantly CBR1. The cofactor is FAD.

The protein localises to the mitochondrion outer membrane. The catalysed reaction is 2 Fe(III)-[cytochrome b5] + NADH = 2 Fe(II)-[cytochrome b5] + NAD(+) + H(+). It catalyses the reaction 2 Fe(3+)-[Dph3] + NADH = 2 Fe(2+)-[Dph3] + NAD(+) + H(+). It functions in the pathway protein modification; peptidyl-diphthamide biosynthesis. Its function is as follows. NADH-dependent reductase for DPH3 and cytochrome b5. Required for the first step of diphthamide biosynthesis, a post-translational modification of histidine which occurs in elongation factor 2. DPH1 and DPH2 transfer a 3-amino-3-carboxypropyl (ACP) group from S-adenosyl-L-methionine (SAM) to a histidine residue, the reaction is assisted by a reduction system comprising DPH3 and a NADH-dependent reductase, predominantly CBR1. By reducing DPH3, also involved in the formation of the tRNA wobble base modification mcm5s 2U (5-methoxycarbonylmethyl-2-thiouridine), mediated by the elongator complex. The cytochrome b5/NADH cytochrome b5 reductase electron transfer system supports the catalytic activity of several sterol biosynthetic enzymes. The sequence is that of NADH-cytochrome b5 reductase 1 (CBR1) from Meyerozyma guilliermondii (strain ATCC 6260 / CBS 566 / DSM 6381 / JCM 1539 / NBRC 10279 / NRRL Y-324) (Yeast).